A 372-amino-acid chain; its full sequence is MSDQLERLDRLPLRTNLRGLSPYGAPQLDVPILLNVNENTHGVPADVQAAITEAVAAAATGLNRYPDREFTELREALAEYLGHGLSPDNIWAANGSNEVLQQILQAFGGPGRKALGFPPTYSMYPLLASGTDTEYVRGVRADDYGLDAQSAAAQVRETGANIVFLCSPNNPTGTGLSLDVVEAVYEAGEASQAIVIVDEAYHEFAHDNTPSALTLLPGRERLIVSRTMSKAFALAGARLGYMAAAPEVTDAIRLVRLPYHLSAVTQATALAALNHREALMADVEDIKVQRDRIVTELLRMGLKPAASDSNYVFFGGLEDPHTIWQGLLDAGVLIRDVGIPGHLRVTAGTEPETTAFLEALEALLDGTAPHRA.

Position 230 is an N6-(pyridoxal phosphate)lysine (Lys-230).

Belongs to the class-II pyridoxal-phosphate-dependent aminotransferase family. Histidinol-phosphate aminotransferase subfamily. Homodimer. Requires pyridoxal 5'-phosphate as cofactor.

The catalysed reaction is L-histidinol phosphate + 2-oxoglutarate = 3-(imidazol-4-yl)-2-oxopropyl phosphate + L-glutamate. It participates in amino-acid biosynthesis; L-histidine biosynthesis; L-histidine from 5-phospho-alpha-D-ribose 1-diphosphate: step 7/9. This is Histidinol-phosphate aminotransferase from Paenarthrobacter aurescens (strain TC1).